The chain runs to 336 residues: E3 ubiquitin-protein ligase RING2 (336 aa).

Ser2 carries the N-acetylserine modification. The interaction with HIP2 stretch occupies residues 2–179; sequence SQAVQTNGTQ…AEDNGDSSHC (178 aa). Ser41 bears the Phosphoserine mark. The RING-type zinc finger occupies 51-91; the sequence is CPICLDMLKNTMTTKECLHRFCADCIITALRSGNKECPTCR. Residues 93–98 are interaction with nucleosomes via an acidic patch on histone H2A and histone H2B; sequence KLVSKR. Residue Lys112 forms a Glycyl lysine isopeptide (Lys-Gly) (interchain with G-Cter in ubiquitin) linkage. Phosphoserine occurs at positions 143 and 168. A disordered region spans residues 157 to 213; that stretch reads QRGKKQQIENGSGAEDNGDSSHCSNASTHSNQEAGPSNKRTKTSDDSGLEPDNNNAA. Over residues 176-191 the composition is skewed to polar residues; that stretch reads SSHCSNASTHSNQEAG. Residues Lys249 and Lys323 each participate in a glycyl lysine isopeptide (Lys-Gly) (interchain with G-Cter in SUMO2) cross-link.

Component of chromatin-associated Polycomb (PcG) complexes. Component of a number of PRC1-like complexes; these complexes contain either the polycomb group ring finger protein PCGF1, or PCGF2, or PCGF3, or BMI1, or PCGF5, or PCGF6. Distinct PRC1-like complexes are composed of a RING1 subunit (RING1B or RING1A), one of the six PCGF proteins (PCGF1, PCGF2, PCGF3, BMI1, PCGF5 or PCGF6), one PHC protein (PHC1, PHC2 or PHC3) and one of the CBX proteins (CBX2, CBX4, CBX6, CBX7 or CBX8). Part of a complex that contains RNF2, UB2D3 and BMI1; within that complex RNF2 and BMI1 form a tight heterodimer, where UB2D3 interacts only with RNF2. The complex composed of RNF2, UB2D3 and BMI1 binds nucleosomes, and has activity only with nucleosomal histone H2A. Part of a complex that contains PCGF5, RNF2 and UBE2D3. Part of a complex that contains AUTS2, PCGF5, RNF2, CSNK2B and RYBP. Interacts with CBX6 and CBX8. Interacts with PHC1, PCGF2, RYBP, CBX7, CBX4, CBX2, RNF1/RING1, BMI1 and PHC2. Interaction with RYBP and CBX7 is mutually exclusive; both compete for the same binding site on RNF2. Component of repressive BCOR complex containing a Polycomb group subcomplex at least composed of RYBP, PCGF1, BCOR and RING1. Interacts with CBX2 and PHC1. Interacts with CHTOP. Interacts with AURKB. Part of the E2F6.com-1 complex in G0 phase composed of E2F6, MGA, MAX, TFDP1, CBX3, BAT8, EUHMTASE1, RNF1/RING1, RNF2/RING2, MBLR, L3MBTL2 and YAF2. Component of some MLL1/MLL complex, at least composed of the core components KMT2A/MLL1, ASH2L, HCFC1/HCF1, WDR5 and RBBP5, as well as the facultative components BACC1, CHD8, E2F6, HSP70, INO80C, KANSL1, LAS1L, MAX, MCRS1, MGA, MYST1/MOF, PELP1, PHF20, PRP31, RING2, RUVB1/TIP49A, RUVB2/TIP49B, SENP3, TAF1, TAF4, TAF6, TAF7, TAF9 and TEX10. Interacts with RYBP, HIP2 and TFCP2. Interacts with NUPR1. Interacts with SAMD7 in a PHC2-dependent manner. Post-translationally, monoubiquitinated, by auto-ubiquitination. Polyubiquitinated in the presence of UBE2D3 (in vitro).

Its subcellular location is the nucleus. It is found in the cytoplasm. It localises to the chromosome. The enzyme catalyses S-ubiquitinyl-[E2 ubiquitin-conjugating enzyme]-L-cysteine + [acceptor protein]-L-lysine = [E2 ubiquitin-conjugating enzyme]-L-cysteine + N(6)-ubiquitinyl-[acceptor protein]-L-lysine.. The protein operates within protein modification; protein ubiquitination. Functionally, E3 ubiquitin-protein ligase that mediates monoubiquitination of 'Lys-119' of histone H2A (H2AK119Ub), thereby playing a central role in histone code and gene regulation. H2AK119Ub gives a specific tag for epigenetic transcriptional repression and participates in X chromosome inactivation of female mammals. May be involved in the initiation of both imprinted and random X inactivation. Essential component of a Polycomb group (PcG) multiprotein PRC1-like complex, a complex class required to maintain the transcriptionally repressive state of many genes, including Hox genes, throughout development. PcG PRC1 complex acts via chromatin remodeling and modification of histones, rendering chromatin heritably changed in its expressibility. E3 ubiquitin-protein ligase activity is enhanced by BMI1/PCGF4. Acts as the main E3 ubiquitin ligase on histone H2A of the PRC1 complex, while RING1 may rather act as a modulator of RNF2/RING2 activity. Plays a role in the transcriptional repression of genes that are required for pluripotency in embryonic stem cells, thereby contributing to differentiation of the ectodermal and endodermal germ layers. Association with the chromosomal DNA is cell-cycle dependent. In resting B- and T-lymphocytes, interaction with AURKB leads to block its activity, thereby maintaining transcription in resting lymphocytes. Also acts as a negative regulator of autophagy by mediating ubiquitination of AMBRA1, leading to its subsequent degradation. In Pongo abelii (Sumatran orangutan), this protein is E3 ubiquitin-protein ligase RING2 (RNF2).